The sequence spans 299 residues: HTH-type transcriptional regulator ArgP (299 aa).

An HTH lysR-type domain is found at 4-60; it reads PDYRALQALDAVIRERGFERAAQKLCITQSAVSQRIKQLENLFGQPLLVRTVPPQPT. The H-T-H motif DNA-binding region spans 21 to 40; it reads FERAAQKLCITQSAVSQRIK.

It belongs to the LysR transcriptional regulatory family. As to quaternary structure, homodimer.

In terms of biological role, controls the transcription of genes involved in arginine and lysine metabolism. The chain is HTH-type transcriptional regulator ArgP from Proteus mirabilis (strain HI4320).